The chain runs to 133 residues: MFKDVVEEFKKFAIKGNAIDLAVGVVIGGAFGKIVTSLVQDIIMPAVGLLLGKVNFKTLSLTVTSIDGSEIVLKYGQFIQSVVDFIIISFSIFLFVKLINSFKKKEEEKPKVEEPSKEEKLLAEIRDILKESK.

2 consecutive transmembrane segments (helical) span residues 19–39 (IDLAVGVVIGGAFGKIVTSLV) and 79–99 (IQSVVDFIIISFSIFLFVKLI).

Belongs to the MscL family. Homopentamer.

The protein localises to the cell membrane. In terms of biological role, channel that opens in response to stretch forces in the membrane lipid bilayer. May participate in the regulation of osmotic pressure changes within the cell. In Clostridium tetani (strain Massachusetts / E88), this protein is Large-conductance mechanosensitive channel.